The chain runs to 398 residues: Nicotinate phosphoribosyltransferase (398 aa).

Phosphohistidine; by autocatalysis is present on H214.

It belongs to the NAPRTase family. Post-translationally, transiently phosphorylated on a His residue during the reaction cycle. Phosphorylation strongly increases the affinity for substrates and increases the rate of nicotinate D-ribonucleotide production. Dephosphorylation regenerates the low-affinity form of the enzyme, leading to product release.

It carries out the reaction nicotinate + 5-phospho-alpha-D-ribose 1-diphosphate + ATP + H2O = nicotinate beta-D-ribonucleotide + ADP + phosphate + diphosphate. It functions in the pathway cofactor biosynthesis; NAD(+) biosynthesis; nicotinate D-ribonucleotide from nicotinate: step 1/1. In terms of biological role, catalyzes the synthesis of beta-nicotinate D-ribonucleotide from nicotinate and 5-phospho-D-ribose 1-phosphate at the expense of ATP. This chain is Nicotinate phosphoribosyltransferase, found in Xanthomonas campestris pv. campestris (strain B100).